We begin with the raw amino-acid sequence, 921 residues long: Short transient receptor potential channel 3 (921 aa).

The disordered stretch occupies residues 1–73; it reads MSTKVRKCKE…PPFSHGPDLS (73 aa). Topologically, residues 1 to 459 are cytoplasmic; sequence MSTKVRKCKE…KILRSPFMKF (459 aa). A compositionally biased stretch (acidic residues) spans 19 to 31; sequence PEEEEDEGEDEGA. ANK repeat units follow at residues 111 to 140, 146 to 175, 177 to 203, and 232 to 261; these read AEEERFLDAAEYGNIPVVRKMLEESKTLNV, MGQNALQLAVGNEHLEVTELLLKKENLARI, DALLLAISKGYVRIVEAILNHPGFAAS, and PDITPIILAAHCQKYEVVHMLLMKGARIER. A Ca(2+)-binding site is contributed by glutamate 158. The helical transmembrane segment at 460–477 threads the bilayer; sequence VAHAASFIIFLGLLVFNA. The Extracellular segment spans residues 478 to 508; that stretch reads SDRFEGITTLPNITVTDYPKQIFRVKTTQFT. Asparagine 489 carries an N-linked (GlcNAc...) asparagine glycan. Residues 509–527 form a helical membrane-spanning segment; sequence WTEMLIMVWVLGMMWSECK. Ca(2+)-binding residues include glutamate 525, glutamate 528, and asparagine 543. At 528–540 the chain is on the cytoplasmic side; it reads ELWLEGPREYILQ. Residues 541–562 form a helical membrane-spanning segment; sequence LWNVLDFGMLSIFIAAFTARFL. Residues 563 to 606 are Extracellular-facing; the sequence is AFLQATKAQQYVDSYVQESDLSEVTLPPEIQYFTYARDKWLPSD. The chain crosses the membrane as a helical span at residues 607–630; the sequence is PQIISEGLYAIAVVLSFSRIAYIL. The Cytoplasmic segment spans residues 631–649; sequence PANESFGPLQISLGRTVKD. The stretch at 634-663 is one ANK 5 repeat; that stretch reads ESFGPLQISLGRTVKDIFKFMVLFIMVFFA. A helical membrane pass occupies residues 650–673; the sequence is IFKFMVLFIMVFFAFMIGMFILYS. The Extracellular portion of the chain corresponds to 674 to 713; it reads YYLGAKVNAAFTTVEESFKTLFWSIFGLSEVTSVVLKYDH. A helical membrane pass occupies residues 714-739; sequence KFIENIGYVLYGIYNVTMVVVLLNML. Residues 740–921 are Cytoplasmic-facing; the sequence is IAMINSSYQE…KLNPSMLRCE (182 aa). The binds to IP3R3 stretch occupies residues 850–870; sequence QIMKRLIKRYVLKAQVDKEND. Ca(2+) contacts are provided by glutamate 871, glutamate 874, glutamate 876, and aspartate 883.

The protein belongs to the transient receptor (TC 1.A.4) family. STrpC subfamily. TRPC3 sub-subfamily. In terms of assembly, homotetramer. Interacts with ITPR1. Interacts with ITPR3. Interacts with MX1. Interacts with RNF24. Interacts with JPH2; the interaction is involved in maintaining Ca(2+) homeostasis in skeletal muscle and is mediated by JPH2 'Ser-165' phosphorylation. As to quaternary structure, interacts with isoform short of TRPC1. Expressed predominantly in brain and at much lower levels in ovary, colon, small intestine, lung, prostate, placenta and testis.

It is found in the cell membrane. The enzyme catalyses Ca(2+)(in) = Ca(2+)(out). Activated by diacylglycerol (DAG) in a membrane-delimited fashion, independently of protein kinase C. Activated by inositol 1,4,5-triphosphate receptors (ITPR) with bound IP3. May be activated by internal calcium store depletion. Inhibited by intracellular Ca(2+). In terms of biological role, forms a receptor-activated non-selective calcium permeant cation channel. Forms a receptor-activated non-selective calcium permeant cation channel. May be operated by a phosphatidylinositol second messenger system activated by receptor tyrosine kinases or G-protein coupled receptors. The protein is Short transient receptor potential channel 3 (TRPC3) of Homo sapiens (Human).